The primary structure comprises 356 residues: Protein HEXIM1 (356 aa).

2 stretches are compositionally biased toward basic and acidic residues: residues 1 to 11 (MAEPLLTEHQH) and 24 to 47 (VHEE…DSRW). A disordered region spans residues 1–162 (MAEPLLTEHQ…RPSKKKRHWK (162 aa)). Positions 48–58 (QSRASLQSGSR) are enriched in polar residues. The segment covering 84–93 (SLEKGEKGQN) has biased composition (basic and acidic residues). Phosphoserine occurs at positions 98 and 103. The segment covering 145–162 (LGKKKHRRRPSKKKRHWK) has biased composition (basic residues). The basic region; mediates nuclear localization and interaction with 7SK snRNA and NR3C1 stretch occupies residues 147 to 174 (KKKHRRRPSKKKRHWKPYYKLTWEEKKK). Positions 199–202 (PYNT) are interaction with P-TEFb. The interval 207-247 (MDDHDQEEPDLKTGLYPKRAAAKSDDTSDEDFVEEAGEEDG) is autoinhibitory acidic region; in absence of 7SK snRNA interacts with the basic region preventing interaction with P-TEFb and modulating subcellular localization. A disordered region spans residues 210 to 259 (HDQEEPDLKTGLYPKRAAAKSDDTSDEDFVEEAGEEDGGSDGMGGDGSEF). Ser230 is modified (phosphoserine). A Phosphothreonine modification is found at Thr233. Over residues 233–248 (TSDEDFVEEAGEEDGG) the composition is skewed to acidic residues. Ser234, Ser249, and Ser257 each carry phosphoserine. The stretch at 280–346 (SKQELIKEYL…LTENELHRQQ (67 aa)) forms a coiled coil. The tract at residues 283–311 (ELIKEYLELEKCLSRKEDENNRLRLESKR) is mediates interaction with CCNT1. The tract at residues 307–352 (LESKRLGGVDARVRELELELDRLRAENLQLLTENELHRQQERAPLS) is required for inhibition of ESR1-dependent transcription.

Belongs to the HEXIM family. As to quaternary structure, homooligomer and heterooligomer with HEXIM2; probably dimeric. Core component of the 7SK RNP complex, at least composed of 7SK RNA, LARP7, MEPCE, HEXIM1 (or HEXIM2) and P-TEFb (composed of CDK9 and CCNT1/cyclin-T1). Interacts with the N-CoR complex through NCOR1. Interacts with ESR1 and NR3C1. May interact with NF-kappa-B through RELA. Interacts with CCNT2; mediates formation of a tripartite complex with KPNA2. Part of the HDP-RNP complex composed of at least HEXIM1, PRKDC, XRCC5, XRCC6, paraspeckle proteins (SFPQ, NONO, PSPC1, RBM14, and MATR3) and NEAT1 non-coding RNA. As to expression, widely expressed with higher expression in heart, skeletal muscle and brain (at protein level).

Its subcellular location is the nucleus. The protein localises to the cytoplasm. Functionally, transcriptional regulator which functions as a general RNA polymerase II transcription inhibitor. Core component of the 7SK RNP complex: in cooperation with 7SK snRNA sequesters P-TEFb in a large inactive 7SK snRNP complex preventing RNA polymerase II phosphorylation and subsequent transcriptional elongation. May also regulate NF-kappa-B, ESR1, NR3C1 and CIITA-dependent transcriptional activity. Plays a role in the regulation of DNA virus-mediated innate immune response by assembling into the HDP-RNP complex, a complex that serves as a platform for IRF3 phosphorylation and subsequent innate immune response activation through the cGAS-STING pathway. The polypeptide is Protein HEXIM1 (Hexim1) (Mus musculus (Mouse)).